The primary structure comprises 89 residues: Small ribosomal subunit protein uS15 (89 aa).

The protein belongs to the universal ribosomal protein uS15 family. In terms of assembly, part of the 30S ribosomal subunit. Forms a bridge to the 50S subunit in the 70S ribosome, contacting the 23S rRNA.

One of the primary rRNA binding proteins, it binds directly to 16S rRNA where it helps nucleate assembly of the platform of the 30S subunit by binding and bridging several RNA helices of the 16S rRNA. Functionally, forms an intersubunit bridge (bridge B4) with the 23S rRNA of the 50S subunit in the ribosome. This Streptococcus agalactiae serotype Ia (strain ATCC 27591 / A909 / CDC SS700) protein is Small ribosomal subunit protein uS15.